A 516-amino-acid chain; its full sequence is Probable cytochrome P450 9f2 (516 aa).

C460 is a binding site for heme.

It belongs to the cytochrome P450 family. Heme serves as cofactor.

It is found in the endoplasmic reticulum membrane. The protein localises to the microsome membrane. In terms of biological role, may be involved in the metabolism of insect hormones and in the breakdown of synthetic insecticides. The chain is Probable cytochrome P450 9f2 (Cyp9f2) from Drosophila melanogaster (Fruit fly).